The primary structure comprises 224 residues: Enolase-phosphatase E1 (224 aa).

Belongs to the HAD-like hydrolase superfamily. MasA/MtnC family. Monomer. Mg(2+) is required as a cofactor.

The enzyme catalyses 5-methylsulfanyl-2,3-dioxopentyl phosphate + H2O = 1,2-dihydroxy-5-(methylsulfanyl)pent-1-en-3-one + phosphate. It functions in the pathway amino-acid biosynthesis; L-methionine biosynthesis via salvage pathway; L-methionine from S-methyl-5-thio-alpha-D-ribose 1-phosphate: step 3/6. It participates in amino-acid biosynthesis; L-methionine biosynthesis via salvage pathway; L-methionine from S-methyl-5-thio-alpha-D-ribose 1-phosphate: step 4/6. Bifunctional enzyme that catalyzes the enolization of 2,3-diketo-5-methylthiopentyl-1-phosphate (DK-MTP-1-P) into the intermediate 2-hydroxy-3-keto-5-methylthiopentenyl-1-phosphate (HK-MTPenyl-1-P), which is then dephosphorylated to form the acireductone 1,2-dihydroxy-3-keto-5-methylthiopentene (DHK-MTPene). The chain is Enolase-phosphatase E1 from Thioalkalivibrio sulfidiphilus (strain HL-EbGR7).